The chain runs to 265 residues: Exosome complex component RRP42 (265 aa).

The protein belongs to the RNase PH family. As to quaternary structure, component of the RNA exosome complex. Specifically part of the catalytically inactive RNA exosome core complex (Exo-9) which may associate with the catalytic subunits RRP6 and DIS3 in cytoplasmic- and nuclear-specific RNA exosome complex forms. Exo-9 is formed by a hexameric base ring of RNase PH domain-containing subunits and a cap ring consisting of CSL4, RRP4 and RRP40.

It localises to the cytoplasm. It is found in the nucleus. The protein localises to the nucleolus. Functionally, non-catalytic component of the RNA exosome complex which has 3'-&gt;5' exoribonuclease activity and participates in a multitude of cellular RNA processing and degradation events. In the nucleus, the RNA exosome complex is involved in proper maturation of stable RNA species such as rRNA, snRNA and snoRNA, in the elimination of RNA processing by-products and non-coding 'pervasive' transcripts, such as antisense RNA species and cryptic unstable transcripts (CUTs), and of mRNAs with processing defects, thereby limiting or excluding their export to the cytoplasm. In the cytoplasm, the RNA exosome complex is involved in general mRNA turnover and in RNA surveillance pathways, preventing translation of aberrant mRNAs. The catalytic inactive RNA exosome core complex of 9 subunits (Exo-9) is proposed to play a pivotal role in the binding and presentation of RNA for ribonucleolysis, and to serve as a scaffold for the association with catalytic subunits and accessory proteins or complexes. RRP42 is part of the hexameric ring of RNase PH domain-containing subunits proposed to form a central channel which threads RNA substrates for degradation. This Saccharomyces cerevisiae (strain ATCC 204508 / S288c) (Baker's yeast) protein is Exosome complex component RRP42 (RRP42).